The chain runs to 184 residues: Bifunctional protein PyrR (184 aa).

Residues 99–111 carry the PRPP-binding motif; that stretch reads IVLVDDVLYTGRT.

The protein belongs to the purine/pyrimidine phosphoribosyltransferase family. PyrR subfamily. As to quaternary structure, homodimer and homohexamer; in equilibrium.

It catalyses the reaction UMP + diphosphate = 5-phospho-alpha-D-ribose 1-diphosphate + uracil. Functionally, regulates transcriptional attenuation of the pyrimidine nucleotide (pyr) operon by binding in a uridine-dependent manner to specific sites on pyr mRNA. This disrupts an antiterminator hairpin in the RNA and favors formation of a downstream transcription terminator, leading to a reduced expression of downstream genes. Its function is as follows. Also displays a weak uracil phosphoribosyltransferase activity which is not physiologically significant. The polypeptide is Bifunctional protein PyrR (Acetivibrio thermocellus (strain ATCC 27405 / DSM 1237 / JCM 9322 / NBRC 103400 / NCIMB 10682 / NRRL B-4536 / VPI 7372) (Clostridium thermocellum)).